We begin with the raw amino-acid sequence, 143 residues long: Large ribosomal subunit protein uL13 (143 aa).

This sequence belongs to the universal ribosomal protein uL13 family. As to quaternary structure, part of the 50S ribosomal subunit.

This protein is one of the early assembly proteins of the 50S ribosomal subunit, although it is not seen to bind rRNA by itself. It is important during the early stages of 50S assembly. This chain is Large ribosomal subunit protein uL13, found in Finegoldia magna (strain ATCC 29328 / DSM 20472 / WAL 2508) (Peptostreptococcus magnus).